Reading from the N-terminus, the 128-residue chain is Small ribosomal subunit protein uS9 (128 aa).

The protein belongs to the universal ribosomal protein uS9 family.

The chain is Small ribosomal subunit protein uS9 from Amoebophilus asiaticus (strain 5a2).